A 625-amino-acid chain; its full sequence is Glucose dehydrogenase [FAD, quinone] (625 aa).

An N-terminal signal peptide occupies residues 1–42 (MATSPSSCDCLVGVPTGPTLASTCGGSAFMLFMGLLEVFIRS). 66–95 (DFIVIGGGSAGSVVASRLSEVPQWKVLLIE) is a binding site for FAD. His544 functions as the Proton acceptor in the catalytic mechanism. Sec613 is a non-standard amino acid (selenocysteine).

The protein belongs to the GMC oxidoreductase family. Requires FAD as cofactor.

It localises to the secreted. It catalyses the reaction a quinone + D-glucose = D-glucono-1,5-lactone + a quinol. This Drosophila pseudoobscura pseudoobscura (Fruit fly) protein is Glucose dehydrogenase [FAD, quinone] (Gld).